We begin with the raw amino-acid sequence, 89 residues long: Neurotoxin beta-KTx 52.1 (89 aa).

An N-terminal signal peptide occupies residues 1–20 (MKQYIFFLALIVLTATFAEA). The propeptide occupies 21–39 (GKKTEILDKVKKVFSKAKD). Residues 53-89 (ELGCPFIDKWCEDHCDSKKLVGKCENFDCSCVKLGGK) form the BetaSPN-type CS-alpha/beta domain. Intrachain disulfides connect cysteine 56-cysteine 76, cysteine 63-cysteine 81, and cysteine 67-cysteine 83.

It belongs to the long chain scorpion toxin family. Class 2 subfamily. As to expression, expressed by the venom gland.

It localises to the secreted. In terms of biological role, inhibits voltage-gated potassium channel. This Lychas mucronatus (Chinese swimming scorpion) protein is Neurotoxin beta-KTx 52.1.